The following is a 319-amino-acid chain: L-lactate dehydrogenase 2 (319 aa).

NAD(+) contacts are provided by residues Val-16, Asp-37, Lys-42, Tyr-68, and 82-83; that span reads GA. Substrate-binding residues include Gln-85 and Arg-91. NAD(+)-binding positions include Ser-104, 121–123, and Ser-146; that span reads AAN. Substrate is bound at residue 123–126; sequence NPVD. Substrate is bound at residue 151–154; that stretch reads DSAR. Residue His-178 is the Proton acceptor of the active site. Tyr-222 is subject to Phosphotyrosine. Position 231 (Thr-231) interacts with substrate.

The protein belongs to the LDH/MDH superfamily. LDH family. Homotetramer.

The protein resides in the cytoplasm. The enzyme catalyses (S)-lactate + NAD(+) = pyruvate + NADH + H(+). The protein operates within fermentation; pyruvate fermentation to lactate; (S)-lactate from pyruvate: step 1/1. Catalyzes the conversion of lactate to pyruvate (Potential). Contributes to S.aureus growth during nitrosative stress in both aerobically and anaerobically cultured cells, despite playing a secondary role in this resistance mechanism. In Staphylococcus aureus (strain Mu3 / ATCC 700698), this protein is L-lactate dehydrogenase 2.